The sequence spans 365 residues: Spermidine/putrescine import ATP-binding protein PotA (365 aa).

In terms of domain architecture, ABC transporter spans 7–237; the sequence is LTLADITKRF…PNNLFVASFI (231 aa). 39–46 is an ATP binding site; that stretch reads GPSGCGKT.

Belongs to the ABC transporter superfamily. Spermidine/putrescine importer (TC 3.A.1.11.1) family. In terms of assembly, the complex is composed of two ATP-binding proteins (PotA), two transmembrane proteins (PotB and PotC) and a solute-binding protein (PotD).

The protein localises to the cell inner membrane. The enzyme catalyses ATP + H2O + polyamine-[polyamine-binding protein]Side 1 = ADP + phosphate + polyamineSide 2 + [polyamine-binding protein]Side 1.. Its function is as follows. Part of the ABC transporter complex PotABCD involved in spermidine/putrescine import. Responsible for energy coupling to the transport system. In Hahella chejuensis (strain KCTC 2396), this protein is Spermidine/putrescine import ATP-binding protein PotA.